A 526-amino-acid polypeptide reads, in one-letter code: Cytochrome P450 monooxygeanse terK (526 aa).

A helical transmembrane segment spans residues N21–F43. C465 is a binding site for heme.

Belongs to the cytochrome P450 family. Requires heme as cofactor.

The protein resides in the membrane. It functions in the pathway secondary metabolite biosynthesis. Cytochrome P450 monooxygeanse; part of the gene cluster that mediates the biosynthesis of terpendoles, indole-diterpene (IDT) mycotoxins including terpendole I, terpendole K, terpendole C, as well as the kinesin Eg5 inhibitor terpendole E. Terpendoles biosynthesis begins with the synthesis of geranylgeranyl diphosphate (GGPP) by a yet unidentified GGPP synthase. Condensation of indole-3-glycerol phosphate with GGPP by the prenyltransferase terC then forms 3-geranylgeranylindole (3-GGI), followed by epoxidation and cyclization of this intermediate (by the FAD-dependent monooxygeanse terM and the terpene cyclase terB) to form paspaline. The cytochrome monooxygenase terQ then hydroxylates paspalline at C-11 to yield terpendole E. The cytochrome monooxygenase terP converts terpendole E to 13-desoxyterpendole I, and terQ converts 13-desoxyterpendole I into terpendole I. TerF and terK are required for conversion of terpendole I to terpendole C which is further converted to terpendole K. The protein is Cytochrome P450 monooxygeanse terK of Tolypocladium album (Soil fungus).